Reading from the N-terminus, the 506-residue chain is Histidine ammonia-lyase (506 aa).

The 5-imidazolinone (Ala-Gly) cross-link spans 142 to 144 (ASG). Ser143 carries the 2,3-didehydroalanine (Ser) modification.

It belongs to the PAL/histidase family. In terms of processing, contains an active site 4-methylidene-imidazol-5-one (MIO), which is formed autocatalytically by cyclization and dehydration of residues Ala-Ser-Gly.

Its subcellular location is the cytoplasm. It catalyses the reaction L-histidine = trans-urocanate + NH4(+). The protein operates within amino-acid degradation; L-histidine degradation into L-glutamate; N-formimidoyl-L-glutamate from L-histidine: step 1/3. The protein is Histidine ammonia-lyase of Bacillus cereus (strain B4264).